We begin with the raw amino-acid sequence, 490 residues long: NAI2-like protein (490 aa).

A signal peptide spans 1 to 24 (MGRKYVVLGLAVCLFLSSFNEVSC). Disordered regions lie at residues 43–83 (EEGE…VDKF) and 155–206 (AATN…FNKG). The stretch at 136–163 (IADERRQRLEDIERKLKAAAATNIVVED) forms a coiled coil. Residues 171-183 (KVEETQEVVKFES) show a composition bias toward basic and acidic residues. Over residues 184–199 (ESSSASSESRRQSSSS) the composition is skewed to low complexity. Residues 433 to 465 (TFEKTVANLSRVIEEASQAYEEYHVVVRKWKEE) adopt a coiled-coil conformation.

The sequence is that of NAI2-like protein from Arabidopsis thaliana (Mouse-ear cress).